A 1475-amino-acid chain; its full sequence is Nuclear pore complex protein Nup153 (1475 aa).

Over residues 1–15 (MASGAGGVGGGGGGK) the composition is skewed to gly residues. 3 disordered regions span residues 1 to 37 (MASG…QQHQ), 90 to 124 (DEES…NYPD), and 171 to 225 (DSTS…TATS). Position 2 is an N-acetylalanine (alanine 2). At threonine 102 the chain carries Phosphothreonine. Composition is skewed to polar residues over residues 107–121 (VSNT…TASN) and 181–190 (ISTTSGFSSR). Phosphoserine occurs at positions 182, 185, 192, 203, and 209. Repeat 1 spans residues 236 to 237 (FG). Residues 236–1418 (FGTLSPSLGN…NSPSGVFTFG (1183 aa)) are 29 X 2 AA repeats of F-G. Phosphoserine is present on residues serine 240, serine 257, serine 297, serine 320, serine 330, serine 333, serine 334, serine 338, and serine 343. A Glycyl lysine isopeptide (Lys-Gly) (interchain with G-Cter in SUMO2) cross-link involves residue lysine 353. The residue at position 369 (threonine 369) is a Phosphothreonine. Lysine 384 carries the post-translational modification N6-acetyllysine. Threonine 388 is subject to Phosphothreonine. Residues serine 500, serine 516, serine 518, serine 522, and serine 529 each carry the phosphoserine modification. O-linked (GlcNAc) serine glycans are attached at residues serine 534 and serine 544. Residue threonine 588 is modified to Phosphothreonine. 4 positions are modified to phosphoserine: serine 607, serine 614, serine 619, and serine 633. Repeat unit 2 spans residues 652–653 (FG). The RanBP2-type 1 zinc finger occupies 657 to 687 (KAGSSWQCDTCLLQNKVTDNKCIACQAAKLS). 4 residues coordinate Zn(2+): cysteine 664, cysteine 667, cysteine 678, and cysteine 681. At serine 687 the chain carries Phosphoserine. Copy 3 of the repeat occupies 715–716 (FG). Position 718 is an N6-acetyllysine (lysine 718). The RanBP2-type 2 zinc finger occupies 722–751 (VIGTWDCDTCLVQNKPEAIKCVACETPKPG). The Zn(2+) site is built by cysteine 728, cysteine 731, cysteine 742, and cysteine 745. The stretch at 786 to 787 (FG) is repeat 4. 2 consecutive RanBP2-type zinc fingers follow at residues 793–822 (PIGS…EKPG) and 851–880 (PEGS…AKPG). Positions 799, 802, 813, 816, 857, 860, 871, and 874 each coordinate Zn(2+). Position 891 is a phosphoserine (serine 891). The stretch at 905–906 (FG) is repeat 5. 2 O-linked (GlcNAc) serine glycosylation sites follow: serine 908 and serine 909. Copy 6 of the repeat occupies 926–927 (FG). N6-acetyllysine is present on lysine 954. 5 tandem repeats follow at residues 961-962 (FG), 983-984 (FG), 1000-1001 (FG), 1024-1025 (FG), and 1084-1085 (FG). The O-linked (GlcNAc) serine glycan is linked to serine 1113. Tandem repeats lie at residues 1118-1119 (FG) and 1135-1136 (FG). A disordered region spans residues 1128 to 1167 (KCQPVFSFGNSEQTKDENSSKSTFSFSMTKPSEKESEQPA). Low complexity predominate over residues 1147–1157 (SKSTFSFSMTK). O-linked (GlcNAc) threonine glycosylation is present at threonine 1156. A run of 11 repeats spans residues 1173-1174 (FG), 1212-1213 (FG), 1228-1229 (FG), 1240-1241 (FG), 1275-1276 (FG), 1289-1290 (FG), 1291-1292 (FG), 1306-1307 (FG), 1319-1320 (FG), 1327-1328 (FG), and 1341-1342 (FG). Positions 1311-1402 (SAPSASPAFG…SAFQFGSSTT (92 aa)) are disordered. The span at 1321-1335 (ANQTPTFGQSQGASQ) shows a compositional bias: polar residues. Polar residues-rich tracts occupy residues 1343 to 1356 (SISS…TGSQ) and 1363 to 1396 (GTVS…SAFQ). The (Microbial infection) Interacts with HIV-1 capsid protein p24 (CA) stretch occupies residues 1350 to 1475 (LFPTGSQPAP…KIKTAVRRRK (126 aa)). 5 tandem repeats follow at residues 1362–1363 (FG), 1374–1375 (FG), 1383–1384 (FG), 1397–1398 (FG), and 1417–1418 (FG). Composition is skewed to polar residues over residues 1420-1431 (NSSTPAASAQPS) and 1438-1463 (FNQS…TSFS). The segment at 1420-1475 (NSSTPAASAQPSGSGGFPFNQSPAAFTVGSNGKNVFSSSGTSFSGRKIKTAVRRRK) is disordered. Phosphoserine is present on residues serine 1457, serine 1461, and serine 1463. A compositionally biased stretch (basic residues) spans 1465 to 1475 (RKIKTAVRRRK).

This sequence belongs to the NUP153 family. As to quaternary structure, part of the nuclear pore complex (NPC). Interacts with TPR (via coiled coil region); the interaction is direct and provides a link between the core structure and the TPR-containing nuclear basket of the nuclear pore complex (NPC). Interacts with HIKESHI. Interacts with SENP2. Interacts with XPO5. Interacts with RAN; the interaction occurs in a GTP- and GDP-independent manner. Interacts with MCM3AP isoform GANP; this interaction is required for GANP localization at the nuclear pore complex. Interacts with MAPK1. (Microbial infection) Interacts (via C-terminus) with HIV-1 capsid protein p24 (CA) (via N-terminus). In terms of assembly, (Microbial infection) Interacts with HIV-1 integrase; this interaction might play a role in nuclear import of HIV pre-integration complex. As to quaternary structure, (Microbial infection) Interacts with hepatitis B virus capsid protein; this interaction probably plays a role in nuclear import of HBV genome. (Microbial infection) Interacts with Epstein-barr virus BGLF4; this interaction allows BGLF4 nuclear entry. In terms of assembly, (Microbial infection) Interacts with HIV-2 virus protein vpx; this interaction might promote vpx nuclear entry. The cofactor is Zn(2+). Post-translationally, phosphorylated in interphase, hyperphosphorylated during mitosis. May play a role in the reversible disassembly of the nuclear pore complex during mitosis. Proteolytically degraded after poliovirus (PV) infection; degradation is partial and NCP- and TPR-binding domains withstand degradation. In terms of processing, O-glycosylated during cytokinesis at sites identical or close to phosphorylation sites, this interferes with the phosphorylation status.

It localises to the nucleus. It is found in the nucleus membrane. The protein resides in the nuclear pore complex. Component of the nuclear pore complex (NPC), a complex required for the trafficking across the nuclear envelope. Functions as a scaffolding element in the nuclear phase of the NPC essential for normal nucleocytoplasmic transport of proteins and mRNAs. Involved in the quality control and retention of unspliced mRNAs in the nucleus; in association with TPR, regulates the nuclear export of unspliced mRNA species bearing constitutive transport element (CTE) in a NXF1- and KHDRBS1-independent manner. Mediates TPR anchoring to the nuclear membrane at NPC. The repeat-containing domain may be involved in anchoring other components of the NPC to the pore membrane. Possible DNA-binding subunit of the nuclear pore complex (NPC). Functionally, (Microbial infection) Interacts with HIV-1 caspid protein P24 and thereby promotes the integration of the virus in the nucleus of non-dividing cells (in vitro). Its function is as follows. (Microbial infection) Binds HIV-2 protein vpx and thereby promotes the nuclear translocation of the lentiviral genome (in vitro). This chain is Nuclear pore complex protein Nup153 (NUP153), found in Homo sapiens (Human).